Consider the following 301-residue polypeptide: Homoserine kinase (301 aa).

86–96 (PLARGLGSSAT) contacts ATP.

The protein belongs to the GHMP kinase family. Homoserine kinase subfamily.

The protein localises to the cytoplasm. The enzyme catalyses L-homoserine + ATP = O-phospho-L-homoserine + ADP + H(+). It participates in amino-acid biosynthesis; L-threonine biosynthesis; L-threonine from L-aspartate: step 4/5. Functionally, catalyzes the ATP-dependent phosphorylation of L-homoserine to L-homoserine phosphate. This is Homoserine kinase from Thermosynechococcus vestitus (strain NIES-2133 / IAM M-273 / BP-1).